Here is a 302-residue protein sequence, read N- to C-terminus: MMKTDTDLINSLSPSAMDQIMLYLAFSAMRTSGHRHGAFLDAAATAAKCAIYMTYIEQGQNLRMTGHLHHIEPKRVKVIVQEVEEALTKGKLLKMLGSQEPRYLIQFPYVWLEQYPWTPSRSRLPGNNLTTEEKRYIEGKLPSNMPDARLINSFQFMELIEFLHRRSQEDFPPERRMPLSEALAEHIKRRLIYSGTVTKIDSPWGMPFYALTRSSYSPEGQEERTYIMVEDTARYFRLMKDWAENNNTNKVMRILEEFDISPDRFEQAKEDLDEIIRHWADRYHESGGKQMVVQMVFGLKDD.

Ser153 is an active-site residue.

The protein belongs to the peptidase S48 family. In terms of assembly, homodimer; disulfide-linked.

Functionally, might be involved in temporal and/or spatial regulation of nitrogen fixation. Dimerization is required for DNA-binding. Has both a protease and a DNA-binding activity. The polypeptide is DNA-binding transcriptional activator HetR (Trichodesmium erythraeum (strain IMS101)).